The following is a 253-amino-acid chain: 5'-nucleotidase SurE (253 aa).

The a divalent metal cation site is built by D8, D9, S39, and N92.

The protein belongs to the SurE nucleotidase family. Requires a divalent metal cation as cofactor.

Its subcellular location is the cytoplasm. The enzyme catalyses a ribonucleoside 5'-phosphate + H2O = a ribonucleoside + phosphate. Its function is as follows. Nucleotidase that shows phosphatase activity on nucleoside 5'-monophosphates. This is 5'-nucleotidase SurE from Burkholderia pseudomallei (strain 1710b).